A 129-amino-acid polypeptide reads, in one-letter code: Phosphoribosyl-AMP cyclohydrolase (129 aa).

Position 76 (Asp-76) interacts with Mg(2+). Residue Cys-77 participates in Zn(2+) binding. Positions 78 and 80 each coordinate Mg(2+). Positions 97 and 104 each coordinate Zn(2+).

Belongs to the PRA-CH family. In terms of assembly, homodimer. It depends on Mg(2+) as a cofactor. Zn(2+) serves as cofactor.

It is found in the cytoplasm. The catalysed reaction is 1-(5-phospho-beta-D-ribosyl)-5'-AMP + H2O = 1-(5-phospho-beta-D-ribosyl)-5-[(5-phospho-beta-D-ribosylamino)methylideneamino]imidazole-4-carboxamide. The protein operates within amino-acid biosynthesis; L-histidine biosynthesis; L-histidine from 5-phospho-alpha-D-ribose 1-diphosphate: step 3/9. Catalyzes the hydrolysis of the adenine ring of phosphoribosyl-AMP. This Methylibium petroleiphilum (strain ATCC BAA-1232 / LMG 22953 / PM1) protein is Phosphoribosyl-AMP cyclohydrolase.